The chain runs to 318 residues: Aldehyde oxidoreductase FAD-binding subunit PaoB (318 aa).

The region spanning 1-223 is the FAD-binding PCMH-type domain; the sequence is MKAFTYERVN…VAVTLPPPLG (223 aa). Residues 26–34 and T108 each bind FAD; that span reads KFIAGGTNL. C119, C129, C138, and C157 together coordinate [4Fe-4S] cluster. Residues D164, I213, and K230 each coordinate FAD.

Heterotrimer composed of PaoA, PaoB and PaoC. It depends on FAD as a cofactor. [4Fe-4S] cluster serves as cofactor.

The protein localises to the periplasm. It catalyses the reaction an aldehyde + A + H2O = a carboxylate + AH2 + H(+). Its activity is regulated as follows. The complex requires PaoD for activity. Oxidizes aldehydes to the corresponding carboxylic acids with a preference for aromatic aldehydes. It might play a role in the detoxification of aldehydes to avoid cell damage. This chain is Aldehyde oxidoreductase FAD-binding subunit PaoB, found in Escherichia coli (strain K12).